The chain runs to 765 residues: Membrane metallo-endopeptidase-like 1 (765 aa).

Residues 1–19 lie on the Cytoplasmic side of the membrane; sequence MVERAGWCRKKSPGFVEYG. The chain crosses the membrane as a helical; Signal-anchor for type II membrane protein span at residues 20-40; the sequence is LMVLLLLLLGAIVTLGVFYSI. The Lumenal portion of the chain corresponds to 41–765; the sequence is GKQLPLLTSL…MHPMKRCRIW (725 aa). Positions 74-765 constitute a Peptidase M13 domain; the sequence is ICTTPSCVIA…MHPMKRCRIW (692 aa). 5 cysteine pairs are disulfide-bonded: C75/C80, C98/C750, C106/C710, C161/C425, and C636/C762. R121 is an a peptide binding site. N-linked (GlcNAc...) asparagine glycans are attached at residues N163, N279, N303, and N336. Residues 523-549 are a coiled coil; that stretch reads FENGLQNLKNNAQRSLKKLREKVDQNL. H599 contacts Zn(2+). The active site involves E600. Zn(2+) contacts are provided by H603 and E662. The active-site Proton donor is the D666. A glycan (N-linked (GlcNAc...) asparagine) is linked at N694.

The protein belongs to the peptidase M13 family. Requires Zn(2+) as cofactor. N-glycosylated. In terms of tissue distribution, highly expressed in testis. Also expressed in ovary. Weakly or not expressed in brain, lung, heart, liver, kidney, adrenal gland and intestine.

Its subcellular location is the membrane. It localises to the secreted. The catalysed reaction is Preferential cleavage of polypeptides between hydrophobic residues, particularly with Phe or Tyr at P1'.. Its activity is regulated as follows. Inhibited by thiorphan and phosphoramidon. Functionally, metalloprotease involved in sperm function, possibly by modulating the processes of fertilization and early embryonic development. Degrades a broad variety of small peptides with a preference for peptides shorter than 3 kDa containing neutral bulky aliphatic or aromatic amino acid residues. Shares the same substrate specificity with MME and cleaves peptides at the same amide bond. This is Membrane metallo-endopeptidase-like 1 (Mmel1) from Mus musculus (Mouse).